A 255-amino-acid polypeptide reads, in one-letter code: Probable cyclic nucleotide phosphodiesterase syc0937_d (255 aa).

The Fe cation site is built by Asp-19, His-21, Asp-59, Asn-89, His-157, His-196, and His-198. AMP is bound by residues His-21, Asp-59, and Asn-89–His-90. His-198 provides a ligand contact to AMP.

Belongs to the cyclic nucleotide phosphodiesterase class-III family. Requires Fe(2+) as cofactor.

The chain is Probable cyclic nucleotide phosphodiesterase syc0937_d from Synechococcus sp. (strain ATCC 27144 / PCC 6301 / SAUG 1402/1) (Anacystis nidulans).